The primary structure comprises 202 residues: Apolipoprotein R (202 aa).

Positions 1–28 (MPPNLQRIFPALCLLGVLFLLHCTPVLC) are cleaved as a signal peptide. Sushi domains follow at residues 29–87 (GCDN…QCKA) and 88–145 (LCPK…KCEW). 4 disulfides stabilise this stretch: C30/C73, C59/C85, C89/C130, and C116/C143.

In terms of assembly, forms high molecular weight disulfide-linked complexes. In terms of tissue distribution, plasma. Found on very low-density lipoprotein (VLDL), on chylomicrons, and in the D &gt; 1.21 g/ml fraction of pig plasma. Found in liver, spleen, lung, bone marrow and lymph node.

Its subcellular location is the secreted. Its function is as follows. May be a lipoprotein-borne regulator of either the coagulation or the complement cascades. This chain is Apolipoprotein R (APOR), found in Sus scrofa (Pig).